Reading from the N-terminus, the 206-residue chain is MGRYLGPSCRLCRREGIKLYLKGEKCYTDKCPLAKRGYAPGQHGQEKKKLTQYGMQLREKQKLKRYYGILERQFVRYYERAERMRGITGENLLQLLERRLDNVVYRLGFAVSRAQARQLVSHGHIEVNGKKVDIPSYLVKPGDVISVKESSRSMELIKNNLEMGRNVPDWLELNKDAFEGRVVSLPRREHIDLPVQEHLIVELYSK.

In terms of domain architecture, S4 RNA-binding spans 98–161 (RRLDNVVYRL…RSMELIKNNL (64 aa)).

The protein belongs to the universal ribosomal protein uS4 family. Part of the 30S ribosomal subunit. Contacts protein S5. The interaction surface between S4 and S5 is involved in control of translational fidelity.

One of the primary rRNA binding proteins, it binds directly to 16S rRNA where it nucleates assembly of the body of the 30S subunit. Its function is as follows. With S5 and S12 plays an important role in translational accuracy. This Caldanaerobacter subterraneus subsp. tengcongensis (strain DSM 15242 / JCM 11007 / NBRC 100824 / MB4) (Thermoanaerobacter tengcongensis) protein is Small ribosomal subunit protein uS4.